The sequence spans 415 residues: Beta-1,4-glucuronyltransferase 1 (415 aa).

Over 1–8 (MQMSYAIR) the chain is Cytoplasmic. A helical; Signal-anchor for type II membrane protein membrane pass occupies residues 9–36 (CAFYQLLLAALMLVAMLQLLYLSLLSGL). Residues 37–415 (HGQEEQEQYF…ARYPNSPHRC (379 aa)) are Lumenal-facing. Asn-204 carries N-linked (GlcNAc...) asparagine glycosylation. Mn(2+) is bound by residues Asp-227 and Asp-229. An N-linked (GlcNAc...) asparagine glycan is attached at Asn-300.

It belongs to the glycosyltransferase 49 family. As to quaternary structure, interacts with LARGE1 and LARGE2. Mn(2+) is required as a cofactor.

It localises to the golgi apparatus membrane. The enzyme catalyses 3-O-[beta-D-Xyl-(1-&gt;4)-Rib-ol-P-Rib-ol-P-3-beta-D-GalNAc-(1-&gt;3)-beta-D-GlcNAc-(1-&gt;4)-(O-6-P-alpha-D-Man)]-Thr-[protein] + UDP-alpha-D-glucuronate = 3-O-[beta-D-GlcA-(1-&gt;3)-beta-D-Xyl-(1-&gt;4)-Rib-ol-P-Rib-ol-P-3-beta-D-GalNAc-(1-&gt;3)-beta-D-GlcNAc-(1-&gt;4)-(O-6-P-alpha-D-Man)]-Thr-[protein] + UDP + H(+). Its pathway is protein modification; protein glycosylation. Its function is as follows. Beta-1,4-glucuronyltransferase involved in O-mannosylation of alpha-dystroglycan (DAG1). Transfers a glucuronic acid (GlcA) residue onto a xylose (Xyl) acceptor to produce the glucuronyl-beta-1,4-xylose-beta disaccharide primer, which is further elongated by LARGE1, during synthesis of phosphorylated O-mannosyl glycan. Phosphorylated O-mannosyl glycan is a carbohydrate structure present in alpha-dystroglycan (DAG1), which is required for binding laminin G-like domain-containing extracellular proteins with high affinity. Required for axon guidance; via its function in O-mannosylation of alpha-dystroglycan (DAG1). In Mus musculus (Mouse), this protein is Beta-1,4-glucuronyltransferase 1.